The following is a 428-amino-acid chain: 3-phosphoshikimate 1-carboxyvinyltransferase (428 aa).

The 3-phosphoshikimate site is built by Lys20, Ser21, and Arg25. Lys20 is a phosphoenolpyruvate binding site. Phosphoenolpyruvate-binding residues include Gly92 and Arg120. Residues Ser166, Gln168, Asp314, and Lys341 each coordinate 3-phosphoshikimate. Position 168 (Gln168) interacts with phosphoenolpyruvate. Residue Asp314 is the Proton acceptor of the active site. Residues Arg345 and Arg387 each contribute to the phosphoenolpyruvate site.

Belongs to the EPSP synthase family. As to quaternary structure, monomer.

Its subcellular location is the cytoplasm. The enzyme catalyses 3-phosphoshikimate + phosphoenolpyruvate = 5-O-(1-carboxyvinyl)-3-phosphoshikimate + phosphate. Its pathway is metabolic intermediate biosynthesis; chorismate biosynthesis; chorismate from D-erythrose 4-phosphate and phosphoenolpyruvate: step 6/7. Functionally, catalyzes the transfer of the enolpyruvyl moiety of phosphoenolpyruvate (PEP) to the 5-hydroxyl of shikimate-3-phosphate (S3P) to produce enolpyruvyl shikimate-3-phosphate and inorganic phosphate. This is 3-phosphoshikimate 1-carboxyvinyltransferase from Listeria monocytogenes serotype 4a (strain HCC23).